A 452-amino-acid polypeptide reads, in one-letter code: Biotin carboxylase (452 aa).

Residues 1–445 (MFKKVLIANR…TTAFVTNHLK (445 aa)) enclose the Biotin carboxylation domain. ATP is bound by residues lysine 116, lysine 158, 164–165 (GG), 200–203 (EKAV), histidine 208, and histidine 235. The ATP-grasp domain maps to 120–317 (RTAMQTAGVP…LVEWQLLIAA (198 aa)). Lysine 237 contributes to the hydrogencarbonate binding site. Residues glutamate 275 and glutamate 288 each coordinate ATP. Glutamate 275, glutamate 288, and asparagine 290 together coordinate Mg(2+). 3 residues coordinate Mn(2+): glutamate 275, glutamate 288, and asparagine 290. Residues arginine 292, valine 295, and arginine 338 each contribute to the hydrogencarbonate site. Arginine 292 is an active-site residue. Arginine 338 contacts biotin.

As to quaternary structure, acetyl-CoA carboxylase is a heterohexamer of biotin carboxyl carrier protein, biotin carboxylase and the two subunits of carboxyl transferase in a 2:2 complex. It depends on Mg(2+) as a cofactor. Mn(2+) is required as a cofactor.

The catalysed reaction is N(6)-biotinyl-L-lysyl-[protein] + hydrogencarbonate + ATP = N(6)-carboxybiotinyl-L-lysyl-[protein] + ADP + phosphate + H(+). It functions in the pathway lipid metabolism; malonyl-CoA biosynthesis; malonyl-CoA from acetyl-CoA: step 1/1. Functionally, this protein is a component of the acetyl coenzyme A carboxylase complex; first, biotin carboxylase catalyzes the carboxylation of the carrier protein and then the transcarboxylase transfers the carboxyl group to form malonyl-CoA. This Halalkalibacterium halodurans (strain ATCC BAA-125 / DSM 18197 / FERM 7344 / JCM 9153 / C-125) (Bacillus halodurans) protein is Biotin carboxylase (accC).